A 378-amino-acid chain; its full sequence is Putative gustatory receptor 22f (378 aa).

The Cytoplasmic portion of the chain corresponds to 1 to 13; that stretch reads MKMFQPRRGFSCH. The helical transmembrane segment at 14-34 threads the bilayer; the sequence is LAWFMLQTTLYASWLLGLFPF. At 35–48 the chain is on the extracellular side; that stretch reads TFDSRRKQLKRSRW. A helical transmembrane segment spans residues 49–69; it reads LLLYGFVLHSLAMCLAMSSHL. Residues 70–88 are Cytoplasmic-facing; it reads ASKQRRKYNAFERNPLLEK. Residues 89–109 form a helical membrane-spanning segment; it reads IYMQFQVTTFFTISVLLLMNV. The Extracellular portion of the chain corresponds to 110-143; it reads WKSNTVRKIANELLTLEGQVKDLLTLKNCPNFNC. The chain crosses the membrane as a helical span at residues 144–164; the sequence is FVIKKHVAAIGQFVISIYFCL. Residues 165 to 178 are Cytoplasmic-facing; sequence CQENSYPKILKILC. The helical transmembrane segment at 179–199 threads the bilayer; the sequence is CLPSVGLQLIIMHFHTEIILV. Over 200-245 the chain is Extracellular; the sequence is YRYVWLVNETLEDSHHLSSSRIHALASLYDRLLKLSELVVACNDLQ. Asn207 carries N-linked (GlcNAc...) asparagine glycosylation. A helical transmembrane segment spans residues 246–266; that stretch reads LILMLIIYLIGNTVQIFFLIV. Residues 267–354 are Cytoplasmic-facing; the sequence is LGVSMNKRYI…LCGLFSINHN (88 aa). A helical membrane pass occupies residues 355 to 375; it reads MGFQMIITSFLYLVYLLQFDF. Topologically, residues 376–378 are extracellular; it reads MNL.

Belongs to the insect chemoreceptor superfamily. Gustatory receptor (GR) family. Gr22e subfamily. In terms of tissue distribution, taste bristles in the foreleg and labial palps.

Its subcellular location is the cell membrane. Functionally, probable gustatory receptor which mediates acceptance or avoidance behavior, depending on its substrates. In Drosophila melanogaster (Fruit fly), this protein is Putative gustatory receptor 22f (Gr22f).